Reading from the N-terminus, the 929-residue chain is Protocadherin gamma-B3 (929 aa).

The first 30 residues, M1–S30, serve as a signal peptide directing secretion. Cadherin domains lie at E31–F133, S134–F242, T243–I347, T348–F452, H453–V562, and E570–L675. Residues E31–H691 lie on the Extracellular side of the membrane. An N-linked (GlcNAc...) asparagine glycan is attached at N136. 2 N-linked (GlcNAc...) asparagine glycosylation sites follow: N419 and N545. The helical transmembrane segment at L692 to S712 threads the bilayer. The Cytoplasmic segment spans residues L713–K929. 2 disordered regions span residues N791 to N838 and A899 to K929. Residues N919–K929 are compositionally biased toward basic residues.

Its subcellular location is the cell membrane. Its function is as follows. Potential calcium-dependent cell-adhesion protein. May be involved in the establishment and maintenance of specific neuronal connections in the brain. The protein is Protocadherin gamma-B3 (PCDHGB3) of Homo sapiens (Human).